The sequence spans 539 residues: Chaperonin GroEL (539 aa).

Residues 29–32 (TLGP), 86–90 (DGTTT), Gly-413, 476–478 (NAA), and Asp-492 contribute to the ATP site.

It belongs to the chaperonin (HSP60) family. As to quaternary structure, forms a cylinder of 14 subunits composed of two heptameric rings stacked back-to-back. Interacts with the co-chaperonin GroES.

It is found in the cytoplasm. It carries out the reaction ATP + H2O + a folded polypeptide = ADP + phosphate + an unfolded polypeptide.. Together with its co-chaperonin GroES, plays an essential role in assisting protein folding. The GroEL-GroES system forms a nano-cage that allows encapsulation of the non-native substrate proteins and provides a physical environment optimized to promote and accelerate protein folding. The chain is Chaperonin GroEL from Macrococcus caseolyticus (strain JCSC5402) (Macrococcoides caseolyticum).